The chain runs to 582 residues: Vacuolar basic amino acid transporter 5 (582 aa).

The Cytoplasmic portion of the chain corresponds to 1–44; that stretch reads MEETKYSSQQEIEGACGSDASLNARGSNDSPMGLSLYLCLASLT. The chain crosses the membrane as a helical span at residues 45–65; it reads LVLFITALDILIVGTIIDVVA. Residues 66 to 80 lie on the Vacuolar side of the membrane; sequence EQFGNYSKTGWLVTG. Asn70 carries N-linked (GlcNAc...) asparagine glycosylation. Residues 81-101 form a helical membrane-spanning segment; that stretch reads YSLPNAILSLIWGRFASIIGF. The Cytoplasmic portion of the chain corresponds to 102–104; that stretch reads QHS. The helical transmembrane segment at 105–125 threads the bilayer; the sequence is LILAILIFEAGSLIAALASSM. Over 126-132 the chain is Vacuolar; that stretch reads NMLIFGR. A helical transmembrane segment spans residues 133 to 153; that stretch reads VVAGVGGSGLQTLCFVIGCTM. Over 154–160 the chain is Cytoplasmic; it reads VGERSRP. A helical membrane pass occupies residues 161–181; it reads LVISILSCAFAVAAIVGPIIG. Residues 182–191 are Vacuolar-facing; that stretch reads GAFTTHVTWR. A helical transmembrane segment spans residues 192–212; that stretch reads WCFYINLPIGGLAIIMFLLTY. Residues 213–256 lie on the Cytoplasmic side of the membrane; that stretch reads KAENKGILQQIKDAIGTISSFTFSKFRHQVNFKRLMNGIIFKFD. A helical membrane pass occupies residues 257–277; sequence FFGFALCSAGLVLFLLGLTFG. Residues 278–287 are Vacuolar-facing; sequence GNKYSWNSGQ. The helical transmembrane segment at 288-308 threads the bilayer; that stretch reads VITYLVLGVLLFIFSLVYDFF. At 309 to 329 the chain is on the cytoplasmic side; sequence LFDKFNPEPDNISYRPLLLRR. The chain crosses the membrane as a helical span at residues 330–350; it reads LVAKPAIIIVNMVTFLLCTGY. Over 351–372 the chain is Vacuolar; sequence NGQMIYSVQFFQLIFASSAWKA. A helical transmembrane segment spans residues 373–393; it reads GLHLIPIVITNVIAAIASGVI. Residues 394–401 are Cytoplasmic-facing; that stretch reads TKKLGLVK. Residues 402–422 traverse the membrane as a helical segment; the sequence is PLLIFGGVLGVIGAGLMTLMT. The N-linked (GlcNAc...) asparagine glycan is linked to Asn423. Over 423 to 430 the chain is Vacuolar; sequence NTSTKSTQ. Residues 431–451 traverse the membrane as a helical segment; sequence IGVLLLPGFSLGFALQASLMS. Over 452 to 469 the chain is Cytoplasmic; that stretch reads AQLQITKDRPEAAMDFIE. Residues 470-492 traverse the membrane as a helical segment; that stretch reads VTAFNTFMKSLGTTLGGVLSTTV. Residues 493–539 lie on the Vacuolar side of the membrane; sequence FSASFHNKVSRAHLEPYEGKTVDDMILYRLQNYDGSHSTIGNILSDS. A helical membrane pass occupies residues 540-560; that stretch reads IKNVFWMDLGFYALGFLFCSF. Over 561 to 582 the chain is Cytoplasmic; the sequence is SSNKKLIIPKKDDTPEDNLEDK.

Belongs to the major facilitator superfamily.

It is found in the vacuole membrane. Its function is as follows. Transporter required for vacuolar uptake of basic amino acids. In Saccharomyces cerevisiae (strain ATCC 204508 / S288c) (Baker's yeast), this protein is Vacuolar basic amino acid transporter 5 (VBA5).